A 218-amino-acid chain; its full sequence is Small ribosomal subunit protein uS5 (218 aa).

A compositionally biased stretch (polar residues) spans 1-10; that stretch reads MTQATNQTPG. The interval 1-63 is disordered; that stretch reads MTQATNQTPG…GRDERDSEWQ (63 aa). Over residues 11 to 25 the composition is skewed to low complexity; sequence QDVPGAADVPAAAEG. Basic and acidic residues predominate over residues 31–63; it reads GERRGGGGGRGGDRRGRGDRRGRGRDERDSEWQ. The S5 DRBM domain maps to 62–125; sequence WQERVIQIRR…ADGKKHLVKV (64 aa).

It belongs to the universal ribosomal protein uS5 family. As to quaternary structure, part of the 30S ribosomal subunit. Contacts proteins S4 and S8.

In terms of biological role, with S4 and S12 plays an important role in translational accuracy. Functionally, located at the back of the 30S subunit body where it stabilizes the conformation of the head with respect to the body. This Synechococcus sp. (strain RCC307) protein is Small ribosomal subunit protein uS5.